We begin with the raw amino-acid sequence, 86 residues long: Protein Tat (86 aa).

The tract at residues methionine 1–asparagine 24 is interaction with human CREBBP. The tract at residues methionine 1–glycine 48 is transactivation. Zn(2+) contacts are provided by cysteine 22, cysteine 25, and cysteine 27. The tract at residues cysteine 22–cysteine 37 is cysteine-rich. The residue at position 28 (lysine 28) is an N6-acetyllysine; by host PCAF. Residues cysteine 30, histidine 33, cysteine 34, and cysteine 37 each coordinate Zn(2+). The tract at residues phenylalanine 38–glycine 48 is core. Residues glycine 48 to proline 58 are compositionally biased toward basic residues. Residues glycine 48–glutamate 86 are disordered. Positions arginine 49–arginine 57 match the Nuclear localization signal, RNA-binding (TAR), and protein transduction motif. Residues arginine 49 to glutamate 86 form an interaction with the host capping enzyme RNGTT region. 2 positions are modified to N6-acetyllysine; by host EP300 and GCN5L2: lysine 50 and lysine 51. 2 positions are modified to asymmetric dimethylarginine; by host PRMT6: arginine 52 and arginine 53. Polar residues predominate over residues serine 62–glycine 79. Lysine 71 participates in a covalent cross-link: Glycyl lysine isopeptide (Lys-Gly) (interchain with G-Cter in ubiquitin). A Cell attachment site motif is present at residues arginine 78 to aspartate 80.

The protein belongs to the lentiviruses Tat family. As to quaternary structure, interacts with host CCNT1. Associates with the P-TEFb complex composed at least of Tat, P-TEFb (CDK9 and CCNT1), TAR RNA, RNA Pol II. Recruits the HATs CREBBP, TAF1/TFIID, EP300, PCAF and GCN5L2. Interacts with host KAT5/Tip60; this interaction targets the latter to degradation. Interacts with the host deacetylase SIRT1. Interacts with host capping enzyme RNGTT; this interaction stimulates RNGTT. Binds to host KDR, and to the host integrins ITGAV/ITGB3 and ITGA5/ITGB1. Interacts with host KPNB1/importin beta-1 without previous binding to KPNA1/importin alpha-1. Interacts with EIF2AK2. Interacts with host nucleosome assembly protein NAP1L1; this interaction may be required for the transport of Tat within the nucleus, since the two proteins interact at the nuclear rim. Interacts with host C1QBP/SF2P32; this interaction involves lysine-acetylated Tat. Interacts with the host chemokine receptors CCR2, CCR3 and CXCR4. Interacts with host DPP4/CD26; this interaction may trigger an anti-proliferative effect. Interacts with host LDLR. Interacts with the host extracellular matrix metalloproteinase MMP1. Interacts with host PRMT6; this interaction mediates Tat's methylation. Interacts with, and is ubiquitinated by MDM2/Hdm2. Interacts with host PSMC3 and HTATIP2. Interacts with STAB1; this interaction may overcome SATB1-mediated repression of IL2 and IL2RA (interleukin) in T cells by binding to the same domain than HDAC1. Interacts (when acetylated) with human CDK13, thereby increasing HIV-1 mRNA splicing and promoting the production of the doubly spliced HIV-1 protein Nef. Interacts with host TBP; this interaction modulates the activity of transcriptional pre-initiation complex. Interacts with host RELA. Interacts with host PLSCR1; this interaction negatively regulates Tat transactivation activity by altering its subcellular distribution. Asymmetrical arginine methylation by host PRMT6 seems to diminish the transactivation capacity of Tat and affects the interaction with host CCNT1. Post-translationally, acetylation by EP300, CREBBP, GCN5L2/GCN5 and PCAF regulates the transactivation activity of Tat. EP300-mediated acetylation of Lys-50 promotes dissociation of Tat from the TAR RNA through the competitive binding to PCAF's bromodomain. In addition, the non-acetylated Tat's N-terminus can also interact with PCAF. PCAF-mediated acetylation of Lys-28 enhances Tat's binding to CCNT1. Lys-50 is deacetylated by SIRT1. In terms of processing, polyubiquitination by host MDM2 does not target Tat to degradation, but activates its transactivation function and fosters interaction with CCNT1 and TAR RNA. Phosphorylated by EIF2AK2 on serine and threonine residues adjacent to the basic region important for TAR RNA binding and function. Phosphorylation of Tat by EIF2AK2 is dependent on the prior activation of EIF2AK2 by dsRNA.

It is found in the host nucleus. Its subcellular location is the host nucleolus. It localises to the host cytoplasm. The protein resides in the secreted. Functionally, transcriptional activator that increases RNA Pol II processivity, thereby increasing the level of full-length viral transcripts. Recognizes a hairpin structure at the 5'-LTR of the nascent viral mRNAs referred to as the transactivation responsive RNA element (TAR) and recruits the cyclin T1-CDK9 complex (P-TEFb complex) that will in turn hyperphosphorylate the RNA polymerase II to allow efficient elongation. The CDK9 component of P-TEFb and other Tat-activated kinases hyperphosphorylate the C-terminus of RNA Pol II that becomes stabilized and much more processive. Other factors such as HTATSF1/Tat-SF1, SUPT5H/SPT5, and HTATIP2 are also important for Tat's function. Besides its effect on RNA Pol II processivity, Tat induces chromatin remodeling of proviral genes by recruiting the histone acetyltransferases (HATs) CREBBP, EP300 and PCAF to the chromatin. This also contributes to the increase in proviral transcription rate, especially when the provirus integrates in transcriptionally silent region of the host genome. To ensure maximal activation of the LTR, Tat mediates nuclear translocation of NF-kappa-B by interacting with host RELA. Through its interaction with host TBP, Tat may also modulate transcription initiation. Tat can reactivate a latently infected cell by penetrating in it and transactivating its LTR promoter. In the cytoplasm, Tat is thought to act as a translational activator of HIV-1 mRNAs. In terms of biological role, extracellular circulating Tat can be endocytosed by surrounding uninfected cells via the binding to several surface receptors such as CD26, CXCR4, heparan sulfate proteoglycans (HSPG) or LDLR. Neurons are rarely infected, but they internalize Tat via their LDLR. Through its interaction with nuclear HATs, Tat is potentially able to control the acetylation-dependent cellular gene expression. Modulates the expression of many cellular genes involved in cell survival, proliferation or in coding for cytokines or cytokine receptors. Tat plays a role in T-cell and neurons apoptosis. Tat induced neurotoxicity and apoptosis probably contribute to neuroAIDS. Circulating Tat also acts as a chemokine-like and/or growth factor-like molecule that binds to specific receptors on the surface of the cells, affecting many cellular pathways. In the vascular system, Tat binds to ITGAV/ITGB3 and ITGA5/ITGB1 integrins dimers at the surface of endothelial cells and competes with bFGF for heparin-binding sites, leading to an excess of soluble bFGF. The chain is Protein Tat from Homo sapiens (Human).